The sequence spans 175 residues: Adenine phosphoribosyltransferase (175 aa).

This sequence belongs to the purine/pyrimidine phosphoribosyltransferase family. In terms of assembly, homodimer.

It localises to the cytoplasm. The enzyme catalyses AMP + diphosphate = 5-phospho-alpha-D-ribose 1-diphosphate + adenine. The protein operates within purine metabolism; AMP biosynthesis via salvage pathway; AMP from adenine: step 1/1. Its function is as follows. Catalyzes a salvage reaction resulting in the formation of AMP, that is energically less costly than de novo synthesis. The chain is Adenine phosphoribosyltransferase from Parvibaculum lavamentivorans (strain DS-1 / DSM 13023 / NCIMB 13966).